Consider the following 254-residue polypeptide: Low affinity immunoglobulin gamma Fc region receptor III-A (254 aa).

Positions 1 to 16 (MWQLLLPTALLLLVSA) are cleaved as a signal peptide. The Extracellular segment spans residues 17 to 208 (GMRTEDLPKA…ISSFFPPGYQ (192 aa)). Ig-like C2-type domains lie at 24–105 (PKAV…LEVH) and 107–189 (GWLL…VNIT). A disulfide bridge connects residues cysteine 47 and cysteine 89. Asparagine 56, asparagine 63, and asparagine 92 each carry an N-linked (GlcNAc...) asparagine glycan. Cysteine 128 and cysteine 172 are oxidised to a cystine. N-linked (GlcNAc...) asparagine glycosylation is found at asparagine 180 and asparagine 187. The helical transmembrane segment at 209 to 229 (VSFCLVMVLLFAVDTGLYFSV) threads the bilayer. At 230-254 (KTNIRSSTRDWKDHKFKWRKDPQDK) the chain is on the cytoplasmic side. Serine 236 is modified (phosphoserine; by PKC). Threonine 237 carries the phosphothreonine; by PKC modification.

As to quaternary structure, forms a heterooligomeric complex with ITAM-containing signaling subunits, either a homodimer of CD247, a homodimer of FCER1G or a heterodimer of CD247 and FCER1G. Interacts (via transmembrane domain) with signaling subunits; this interaction is a prerequisite for receptor complex expression on the cell surface and intracellular signal transduction. Binds the Fc region of antigen-complexed IgG with a preference for IgG1 and IgG3 isotypes. Interacts with CD2; this interaction is involved in NK cell activation and cytotoxicity. Interacts with S100A4; this interaction inhibits PKC-dependent phosphorylation of FCGR3A. Glycosylated. Contains high mannose- and complex-type oligosaccharides. Glycosylation at Asn-180 is mandatory for high affinity binding to the Fc and for discrimination between fucosylated and afucosylated IgG glycoforms. In terms of processing, undergoes rapid ectodomain shedding upon NK cell stimulation. The soluble form is produced by a proteolytic cleavage mediated by ADAM17. Repeated stimulation causes receptor shedding, a mechanism that allows for increased NK cell motility and detachment from opsonized target cells while avoiding activation-induced NK cell apoptosis. Post-translationally, phosphorylated at RSSTR motif by PKC. The relevant physiological PKCs might be PRKCI, PRKCG, PRKCE, PRKCH and PRKCQ. In terms of tissue distribution, expressed in natural killer cells (at protein level). Expressed in a subset of circulating monocytes (at protein level).

The protein localises to the cell membrane. It is found in the secreted. Receptor for the invariable Fc fragment of immunoglobulin gamma (IgG). Optimally activated upon binding of clustered antigen-IgG complexes displayed on cell surfaces, triggers lysis of antibody-coated cells, a process known as antibody-dependent cellular cytotoxicity (ADCC). Does not bind free monomeric IgG, thus avoiding inappropriate effector cell activation in the absence of antigenic trigger. Mediates IgG effector functions on natural killer (NK) cells. Binds antigen-IgG complexes generated upon infection and triggers NK cell-dependent cytokine production and degranulation to limit viral load and propagation. Involved in the generation of memory-like adaptive NK cells capable to produce high amounts of IFNG and to efficiently eliminate virus-infected cells via ADCC. Regulates NK cell survival and proliferation, in particular by preventing NK cell progenitor apoptosis. Fc-binding subunit that associates with CD247 and/or FCER1G adapters to form functional signaling complexes. Following the engagement of antigen-IgG complexes, triggers phosphorylation of immunoreceptor tyrosine-based activation motif (ITAM)-containing adapters with subsequent activation of phosphatidylinositol 3-kinase signaling and sustained elevation of intracellular calcium that ultimately drive NK cell activation. The ITAM-dependent signaling coupled to receptor phosphorylation by PKC mediates robust intracellular calcium flux that leads to production of pro-inflammatory cytokines, whereas in the absence of receptor phosphorylation it mainly activates phosphatidylinositol 3-kinase signaling leading to cell degranulation. Costimulates NK cells and trigger lysis of target cells independently of IgG binding. Mediates the antitumor activities of therapeutic antibodies. Upon ligation on monocytes triggers TNFA-dependent ADCC of IgG-coated tumor cells. Mediates enhanced ADCC in response to afucosylated IgGs. Its function is as follows. (Microbial infection) Involved in Dengue virus pathogenesis via antibody-dependent enhancement (ADE) mechanism. Secondary infection with Dengue virus triggers elevated levels of afucosylated non-neutralizing IgG1s with reactivity to viral envelope/E protein. Viral antigen-IgG1 complexes bind with high affinity to FCGR3A, facilitating virus entry in myeloid cells and subsequent viral replication. The polypeptide is Low affinity immunoglobulin gamma Fc region receptor III-A (Homo sapiens (Human)).